The following is a 169-amino-acid chain: Procalin (169 aa).

An N-terminal signal peptide occupies residues 1-18 (MKTFIVITFIGILSYAYA). Disulfide bonds link cysteine 21–cysteine 125, cysteine 54–cysteine 168, and cysteine 83–cysteine 97.

The protein belongs to the calycin superfamily. Triabin family. Expressed in salivary glands.

It is found in the secreted. This chain is Procalin, found in Hospesneotomae protracta (Western bloodsucking conenose).